Reading from the N-terminus, the 153-residue chain is Endoribonuclease YbeY (153 aa).

Histidine 114, histidine 118, and histidine 124 together coordinate Zn(2+).

This sequence belongs to the endoribonuclease YbeY family. The cofactor is Zn(2+).

It localises to the cytoplasm. In terms of biological role, single strand-specific metallo-endoribonuclease involved in late-stage 70S ribosome quality control and in maturation of the 3' terminus of the 16S rRNA. The protein is Endoribonuclease YbeY of Shewanella sp. (strain MR-4).